An 85-amino-acid chain; its full sequence is Keratin-associated protein 7-1 (85 aa).

Residues 37–82 form a 12 X 2 AA repeats of G-[YCGS] region; sequence GSPLGYGCNGYSSLGYGFGGSSFSNLGCGYGGSFYRPWGSGSGFGY.

This sequence belongs to the KRTAP type 7 family. As to quaternary structure, interacts with wool keratins. In terms of tissue distribution, wool.

In terms of biological role, in the wool cortex, wool keratin intermediate filaments are embedded in an interfilamentous matrix, consisting of hair keratin-associated proteins (KRTAP), which are essential for the formation of a rigid and resistant wool shaft through their extensive disulfide bond cross-linking with abundant cysteine residues of wool keratins. The matrix proteins include the high-sulfur and high-glycine-tyrosine keratins. The chain is Keratin-associated protein 7-1 (KRTAP7-1) from Ovis aries (Sheep).